The following is a 115-amino-acid chain: NADH-ubiquinone oxidoreductase chain 3 (115 aa).

3 helical membrane-spanning segments follow: residues 4-24, 55-75, and 84-104; these read ALTL…AFWL, FFLV…LLPL, and LTTM…SLAY.

This sequence belongs to the complex I subunit 3 family. In terms of assembly, core subunit of respiratory chain NADH dehydrogenase (Complex I) which is composed of 45 different subunits. Interacts with TMEM186. Interacts with TMEM242.

It localises to the mitochondrion inner membrane. The enzyme catalyses a ubiquinone + NADH + 5 H(+)(in) = a ubiquinol + NAD(+) + 4 H(+)(out). Core subunit of the mitochondrial membrane respiratory chain NADH dehydrogenase (Complex I) which catalyzes electron transfer from NADH through the respiratory chain, using ubiquinone as an electron acceptor. Essential for the catalytic activity of complex I. In Halichoerus grypus (Gray seal), this protein is NADH-ubiquinone oxidoreductase chain 3.